The chain runs to 619 residues: Type VI secretion system component TssF1 (619 aa).

Interacts with TssA1.

In terms of biological role, core component of the H1 type VI (H1-T6SS) secretion system that plays a role in the release of toxins targeting both eukaryotic and prokaryotic species. The chain is Type VI secretion system component TssF1 from Pseudomonas aeruginosa (strain ATCC 15692 / DSM 22644 / CIP 104116 / JCM 14847 / LMG 12228 / 1C / PRS 101 / PAO1).